The following is a 453-amino-acid chain: Glutamyl-tRNA(Gln) amidotransferase subunit A (453 aa).

Catalysis depends on charge relay system residues Lys-55 and Ser-130. Ser-154 functions as the Acyl-ester intermediate in the catalytic mechanism.

This sequence belongs to the amidase family. GatA subfamily. Heterotrimer of A, B and C subunits.

The catalysed reaction is L-glutamyl-tRNA(Gln) + L-glutamine + ATP + H2O = L-glutaminyl-tRNA(Gln) + L-glutamate + ADP + phosphate + H(+). In terms of biological role, allows the formation of correctly charged Gln-tRNA(Gln) through the transamidation of misacylated Glu-tRNA(Gln) in organisms which lack glutaminyl-tRNA synthetase. The reaction takes place in the presence of glutamine and ATP through an activated gamma-phospho-Glu-tRNA(Gln). The sequence is that of Glutamyl-tRNA(Gln) amidotransferase subunit A from Aliarcobacter butzleri (strain RM4018) (Arcobacter butzleri).